The primary structure comprises 414 residues: MTFVAASITDNQFDVAIAGGGVVGLVLAAGLRHTGLKIAIIEALPKEQALTKPQAYAISLLSGKILAGLGVWENIKDSIGHFERIQISDNDYRGTVPFAKEDVDELALGHVAEHPVILQALENCVEQCPRIAWFRPAELISFTAGENHKQVTLQQEGREITLQTKLLVAADGARSHTRSLAGIQTKGWKYWQSCVAFTIQHQAPDNTTAFERFCDTGPMGILPLPGDRAQIVWTMPHHKAHTLVNLPEADFITELRQRIGDRLGEFHLINARRLFPVQLMQSDCYVQPRLALVGDAAHCCHPVGGQGLNLGIRDGAALAQVIATAHSQGEDWGSLAVLKRYEHWRKPENWLILGFTDLLDRFFSSHWLPAIALRRFGLEVLRLVPPAKKLALRLMTGLLGRKPQLATGQSLVSQ.

Belongs to the UbiH/COQ6 family. Requires FAD as cofactor.

This is an uncharacterized protein from Synechocystis sp. (strain ATCC 27184 / PCC 6803 / Kazusa).